A 1424-amino-acid polypeptide reads, in one-letter code: Putative disease resistance protein At3g14460 (1424 aa).

The NB-ARC domain maps to 152 to 454 (WRQASRSRPD…AIDLLYQPRS (303 aa)). 200 to 207 (GMPGVGKT) provides a ligand contact to ATP. 7 LRR repeats span residues 498–523 (VSGD…HFSF), 552–571 (PTSL…LLNA), 572–595 (LSGL…LKGL), 597–618 (LLRY…VCTL), 620–641 (NLQT…SIAE), 642–665 (LINL…IKKL), and 806–830 (LPSL…FFFG). Disordered regions lie at residues 911–977 (FRRS…PKDR) and 1050–1070 (IKSS…QYDD). 2 stretches are compositionally biased toward polar residues: residues 912-927 (RRSL…SIPS) and 934-972 (SSPT…SLSS). LRR repeat units follow at residues 1090–1114 (PQNL…LTES), 1118–1139 (LHEL…HPPT), 1238–1262 (TPKL…LFGL), 1264–1286 (SLLS…GFPS), and 1310–1336 (LENL…LLPK).

This sequence belongs to the disease resistance NB-LRR family.

Functionally, potential disease resistance protein. The sequence is that of Putative disease resistance protein At3g14460 from Arabidopsis thaliana (Mouse-ear cress).